Consider the following 112-residue polypeptide: Chaperone NapD (112 aa).

It belongs to the NapD family. As to quaternary structure, interacts with the cytoplasmic NapA precursor.

It localises to the cytoplasm. Functionally, chaperone for NapA, the catalytic subunit of the periplasmic nitrate reductase. It binds directly and specifically to the twin-arginine signal peptide of NapA, preventing premature interaction with the Tat translocase and premature export. The protein is Chaperone NapD of Paracoccus pantotrophus (Thiosphaera pantotropha).